The primary structure comprises 195 residues: Protein GrpE (195 aa).

This sequence belongs to the GrpE family. Homodimer.

It localises to the cytoplasm. In terms of biological role, participates actively in the response to hyperosmotic and heat shock by preventing the aggregation of stress-denatured proteins, in association with DnaK and GrpE. It is the nucleotide exchange factor for DnaK and may function as a thermosensor. Unfolded proteins bind initially to DnaJ; upon interaction with the DnaJ-bound protein, DnaK hydrolyzes its bound ATP, resulting in the formation of a stable complex. GrpE releases ADP from DnaK; ATP binding to DnaK triggers the release of the substrate protein, thus completing the reaction cycle. Several rounds of ATP-dependent interactions between DnaJ, DnaK and GrpE are required for fully efficient folding. The protein is Protein GrpE of Francisella tularensis subsp. mediasiatica (strain FSC147).